Here is a 248-residue protein sequence, read N- to C-terminus: tRNA (guanine-N(1)-)-methyltransferase (248 aa).

S-adenosyl-L-methionine-binding positions include Gly113 and 133 to 138; that span reads IGDFVL.

This sequence belongs to the RNA methyltransferase TrmD family. Homodimer.

It is found in the cytoplasm. It catalyses the reaction guanosine(37) in tRNA + S-adenosyl-L-methionine = N(1)-methylguanosine(37) in tRNA + S-adenosyl-L-homocysteine + H(+). Functionally, specifically methylates guanosine-37 in various tRNAs. In Dehalococcoides mccartyi (strain CBDB1), this protein is tRNA (guanine-N(1)-)-methyltransferase.